Here is a 376-residue protein sequence, read N- to C-terminus: TelA-like protein SE_1089 (376 aa).

The protein belongs to the TelA family.

This is TelA-like protein SE_1089 from Staphylococcus epidermidis (strain ATCC 12228 / FDA PCI 1200).